The following is a 412-amino-acid chain: Phosphoglycerate kinase (412 aa).

Residues 24–26 (DLN), Arg-44, 67–70 (HLGR), Arg-126, and Arg-170 each bind substrate. Residues Lys-220, Gly-308, Glu-339, and 368 to 371 (GGDS) contribute to the ATP site.

Belongs to the phosphoglycerate kinase family. Monomer.

The protein localises to the cytoplasm. It carries out the reaction (2R)-3-phosphoglycerate + ATP = (2R)-3-phospho-glyceroyl phosphate + ADP. Its pathway is carbohydrate degradation; glycolysis; pyruvate from D-glyceraldehyde 3-phosphate: step 2/5. This is Phosphoglycerate kinase from Mycobacteroides abscessus (strain ATCC 19977 / DSM 44196 / CCUG 20993 / CIP 104536 / JCM 13569 / NCTC 13031 / TMC 1543 / L948) (Mycobacterium abscessus).